The chain runs to 157 residues: Arginine regulator (157 aa).

The protein belongs to the ArgR family.

It localises to the cytoplasm. Its pathway is amino-acid degradation; L-arginine degradation via ADI pathway. Its function is as follows. Regulates the transcription of the arc operon, involved in arginine catabolism. The polypeptide is Arginine regulator (argR1) (Streptococcus pyogenes serotype M3 (strain ATCC BAA-595 / MGAS315)).